The chain runs to 497 residues: Probable cytosol aminopeptidase (497 aa).

Positions 267 and 272 each coordinate Mn(2+). The active site involves Lys279. The Mn(2+) site is built by Asp290, Asp349, and Glu351. Arg353 is a catalytic residue.

The protein belongs to the peptidase M17 family. It depends on Mn(2+) as a cofactor.

The protein resides in the cytoplasm. It catalyses the reaction Release of an N-terminal amino acid, Xaa-|-Yaa-, in which Xaa is preferably Leu, but may be other amino acids including Pro although not Arg or Lys, and Yaa may be Pro. Amino acid amides and methyl esters are also readily hydrolyzed, but rates on arylamides are exceedingly low.. It carries out the reaction Release of an N-terminal amino acid, preferentially leucine, but not glutamic or aspartic acids.. In terms of biological role, presumably involved in the processing and regular turnover of intracellular proteins. Catalyzes the removal of unsubstituted N-terminal amino acids from various peptides. In Nitrosomonas eutropha (strain DSM 101675 / C91 / Nm57), this protein is Probable cytosol aminopeptidase.